The sequence spans 206 residues: LexA repressor (206 aa).

Positions 28–48 (VREIGEAVGLASSSTVHGHLD) form a DNA-binding region, H-T-H motif. Active-site for autocatalytic cleavage activity residues include Ser-128 and Lys-166.

This sequence belongs to the peptidase S24 family. In terms of assembly, homodimer.

It catalyses the reaction Hydrolysis of Ala-|-Gly bond in repressor LexA.. Functionally, represses a number of genes involved in the response to DNA damage (SOS response), including recA and lexA. In the presence of single-stranded DNA, RecA interacts with LexA causing an autocatalytic cleavage which disrupts the DNA-binding part of LexA, leading to derepression of the SOS regulon and eventually DNA repair. This Exiguobacterium sp. (strain ATCC BAA-1283 / AT1b) protein is LexA repressor.